A 487-amino-acid chain; its full sequence is Epstein-Barr nuclear antigen 2 (487 aa).

Residues 1–210 (MPTFYLALHG…TPPTPLPPAT (210 aa)) are SMARCB1/INI1 binding. 2 disordered regions span residues 52–121 (VGEN…LGYD) and 258–487 (SMHP…PSIQ). Residues 58-100 (VPPPLPPPPPPPPPPPPPPPPPPPPPPPPPPSPPPPPPPPPPP) are compositionally biased toward pro residues. Basic and acidic residues predominate over residues 101–118 (QRRDAWTQEPSPLDRDPL). 2 stretches are compositionally biased toward pro residues: residues 286–307 (PPMP…PPPG) and 319–333 (SGPP…PPQP). Positions 344-366 (SRGRGRGRGRGRGKGKSRDKQRK) are enriched in basic residues. 7 consecutive repeat copies span residues 345–346 (RG), 347–348 (RG), 349–350 (RG), 351–352 (RG), 353–354 (RG), 355–356 (RG), and 357–358 (KG). The interval 345 to 358 (RGRGRGRGRGRGKG) is 6.5 X 2 AA tandem repeats of R-G. 2 consecutive short sequence motifs (PXLXP motif, interaction with host ZMYND11) follow at residues 383 to 387 (PELSP) and 437 to 441 (PILFP).

This sequence belongs to the herpesviridae EBNA2 family. In terms of assembly, interacts with human SMARCB1/INI1, presumably generating an open chromatin conformation at the EBNA2-responsive target genes. Interacts with human WAPL. Interacts with host CBF1; this interaction allows transcriptional activation by EBNA2. Interacts with host general transcription factors GTF2B, ERCC2 and ERCC3. Interacts (via PXLXP motif) with host ZMYND11/BS69 (via MYND-type zinc finger). Interacts with host EBF1. Phosphorylated.

It localises to the host nucleus matrix. Its function is as follows. Plays a key role in the activation of the host resting B-cell and stimulation of B-cell proliferation. Acts by up-regulating the expression of viral EBNA1-6, LMP1, LMP2A and LMP2B genes, as well as several host genes including CD21, CD23 and MYC. Activates transcription by acting as an adapter molecule that binds to cellular sequence-specific DNA-binding proteins such as host CBF1, SMARCB1 and SPI1. Once EBNA2 is near promoter sites, its acidic activating domain recruits basal and activation-associated transcription factors TFIIB, TAF40, TFIIH components ERCC2 and ERCC3, and CBP in order to promote transcription. Alternatively, EBNA2 can affect activities of cell cycle regulators and retard cell cycle progression at G2/M phase. It also induces chromosomal instability, by disrupting mitotic checkpoints, multi-nucleation and formation of micronuclei in infected cells. This chain is Epstein-Barr nuclear antigen 2 (EBNA2), found in Homo sapiens (Human).